The following is a 443-amino-acid chain: Differentially expressed in FDCP 8 homolog A (443 aa).

The disordered stretch occupies residues 1–49 (MEYDDKLVRFRQGHLNPFDKQGGAERHPADSEAQPPKDSSTISPHSIPE). 2 consecutive Phorbol-ester/DAG-type zinc fingers follow at residues 134 to 185 (EHRF…TKPC) and 364 to 424 (IHTT…STSC).

It belongs to the DEF8 family.

Its function is as follows. Positively regulates lysosome peripheral distribution and ruffled border formation in osteoclasts. Involved in bone resorption. This is Differentially expressed in FDCP 8 homolog A (def8-a) from Xenopus laevis (African clawed frog).